The chain runs to 423 residues: Glycine amidinotransferase, mitochondrial (423 aa).

The N-terminal 48 residues, 1 to 48 (MLRVRCLRGGSRGAEAVHYIGSRLGRTLTGWVQRTFQSTQAATASSRN), are a transit peptide targeting the mitochondrion. Residues 39 to 51 (TQAATASSRNSSA) show a composition bias toward low complexity. Residues 39–65 (TQAATASSRNSSAADDKATEPLPKDCP) form a disordered region. Phosphoserine is present on residues Ser-46 and Ser-49. Basic and acidic residues predominate over residues 52 to 61 (ADDKATEPLP). Residue Asp-170 participates in arginine binding. Active-site residues include Asp-254 and His-303. The arginine site is built by Asp-305, Arg-322, Ser-354, and Ser-355. Lys-385 carries the post-translational modification N6-acetyllysine. Cys-407 functions as the Amidino-cysteine intermediate in the catalytic mechanism.

The protein belongs to the amidinotransferase family. As to quaternary structure, homodimer.

The protein resides in the mitochondrion inner membrane. The catalysed reaction is L-arginine + glycine = guanidinoacetate + L-ornithine. It carries out the reaction 4-aminobutanoate + L-arginine = 4-guanidinobutanoate + L-ornithine. The enzyme catalyses beta-alanine + L-arginine = 3-guanidinopropanoate + L-ornithine. It catalyses the reaction taurine + L-arginine = taurocyamine + L-ornithine. Its pathway is amine and polyamine biosynthesis; creatine biosynthesis; creatine from L-arginine and glycine: step 1/2. Transamidinase that catalyzes the transfer of the amidino group of L-arginine onto the amino moiety of acceptor metabolites such as glycine, beta-alanine, gamma-aminobutyric acid (GABA) and taurine yielding the corresponding guanidine derivatives. Catalyzes the rate-limiting step of creatine biosynthesis, namely the transfer of the amidino group from L-arginine to glycine to generate guanidinoacetate, which is then methylated by GAMT to form creatine. Provides creatine as a source for ATP generation in tissues with high energy demands, in particular skeletal muscle, heart and brain. The protein is Glycine amidinotransferase, mitochondrial (GATM) of Pongo abelii (Sumatran orangutan).